The sequence spans 221 residues: Cysteine-rich venom protein (221 aa).

Glycine 1 is a signal peptide. The SCP domain occupies 21–148 (DLHNSLRRSV…EYKYFYVCQY (128 aa)). 8 disulfides stabilise this stretch: cysteine 57–cysteine 135, cysteine 74–cysteine 149, cysteine 130–cysteine 146, cysteine 168–cysteine 175, cysteine 171–cysteine 180, cysteine 184–cysteine 216, cysteine 193–cysteine 210, and cysteine 201–cysteine 214. In terms of domain architecture, ShKT spans 184–216 (CTHEDKFTNCKDLVKQGCNNNYLKTNCPASCSC).

It belongs to the CRISP family. In terms of tissue distribution, expressed by the venom gland.

The protein localises to the secreted. Functionally, blocks contraction of smooth muscle elicited by high potassium-induced depolarization, but does not block caffeine-stimulated contraction. May target voltage-gated calcium channels in smooth muscle. In Vipera nikolskii (Nikolsky's adder), this protein is Cysteine-rich venom protein.